Consider the following 537-residue polypeptide: Probable quinate permease (537 aa).

The Cytoplasmic portion of the chain corresponds to 1-22 (MSILSLVEDRPTPKEVYNWKIY). Residues 23–43 (LLAAVASCTSCMIGYDSAFIG) traverse the membrane as a helical segment. Over 44 to 74 (TTISLQSFKDEFDWDSMSAAHQDLVSSNIVS) the chain is Extracellular. Residues 75–95 (LYQAGAFFGAFFAYPIGHFWG) traverse the membrane as a helical segment. The Cytoplasmic portion of the chain corresponds to 96-97 (RK). The chain crosses the membrane as a helical span at residues 98-118 (WGLMVSALIFTLGAGIMLGTN). Over 119–130 (GDRGFGLLYGGR) the chain is Extracellular. Residues 131–151 (VLAGLGVGAGSNITPIYISEL) form a helical membrane-spanning segment. Topologically, residues 152-159 (SPPAIRGR) are cytoplasmic. Residues 160–180 (LVGVYELGWQIGGLVGFWICY) traverse the membrane as a helical segment. The Extracellular portion of the chain corresponds to 181–193 (GVDETLPPSHKQW). Residues 194–214 (IIPFAVQLIPSGLLIIGALFL) traverse the membrane as a helical segment. Over 215–285 (KESPRWLFLR…AWTNKKILYR (71 aa)) the chain is Cytoplasmic. A helical transmembrane segment spans residues 286-306 (LFLGSMLFFWQNGSGINAINY). Residues 307-325 (YSPTVFKSIGVTGSNTSLF) are Extracellular-facing. A helical membrane pass occupies residues 326–346 (TTGIFGVVKTVVTFIWLLWLI). Over 347 to 352 (DRVGRR) the chain is Cytoplasmic. The helical transmembrane segment at 353 to 373 (LLLLIGAAGGSICLWIVGAYI) threads the bilayer. At 374 to 387 (KIARPSERENKQMD) the chain is on the extracellular side. A helical transmembrane segment spans residues 388 to 408 (GGGIAAMFFFYLWTVFYTPSW). Residues 409–456 (NGTPWVINSEMFDPNIRSLAQACAAGSNWLWNFLISRFTPQMFAKMDY) are Cytoplasmic-facing. The helical transmembrane segment at 457–477 (GVYFFFASLMILSIIFVFFLI) threads the bilayer. Residues 478 to 537 (PETKGIPLESMDRLFETQPIWRAHGTLLKQIREDEERFRHDLEDSGFVKSTDRQVEVVDA) lie on the Extracellular side of the membrane.

It belongs to the major facilitator superfamily. Sugar transporter (TC 2.A.1.1) family. In terms of assembly, interacts with creB. In terms of processing, ubiquitinated. Deubiquitinated by creB, probably to control its activity or amount.

It localises to the cell membrane. Its function is as follows. Integral membrane transporter that imports quinic acid to be catabolized as a carbon source. This is Probable quinate permease (qutD) from Aspergillus flavus (strain ATCC 200026 / FGSC A1120 / IAM 13836 / NRRL 3357 / JCM 12722 / SRRC 167).